A 1295-amino-acid polypeptide reads, in one-letter code: MNEVNDFDAIRISLASPDQIRSWSYGEVTKPETINYRTLKPERDGLFCERIFGPIKDFECACGKYKRIRYKGIICDKCGVEIARAKVRRERMGHIELACPVGHIWFTRGIPSRVGLLLNLSTRSLERIIYYSHFIITAVNDDAREKAIKDLEVISSQRVADKGSEVDTRVAQMEAEDATVEAINQIRRDFSTEREQMEEDIQLLIDQLKDLQKGNLLTENQYYELKQRFSNVFEASMGAEALLKLLSYIDMDKERSKLIQETRSTSGQRRKKAGKQLQLVEAFRRSSNKPEWMIMTVLPVLPPDLRPMVQLDGGRFATSDLNDLYRRVINRNNRLQHLMEIGAPEIIIRNEKRMLQEAVDSLIDNGRRGKSVAVNGDHKAKSLSDLLRGKQGRFRQNLLGKRVDYSGRSVIVVGPSLKLSQCGLPRRMALELFKPFVMHRLVRDGLAPNIKSARRLVERARPEVYDILEEVVKDRPVLLNRAPTLHRLSIQAFEPVLIDGSALRLHPLVCSAFNADFDGDQMAVHVPLSKAAVKEARETMLSIHNMMLPSSGEPVVSPSLDMVFGCYYLTTTRPGAKGEGKIFGDFEEAKRYYEMGIIDLRAIIKVRDGKGNMLETTTGRIIFNDVLPKAVEFQNMDIPKSAIKKIIGRCYKILSSQDMAVMLDKIKELGFKFATSSGISIAMSDISVPREKTKLVAAADERTAIAEGQFARGLITEDERYNSIIETWMETTDRITDAIQAGFDKQGSVYMMANSGAKGNISQIRQMAGLRGLMTNPSGRIIDFPIKSSLREGLTALEYFISTHGARKGLADTALRTSGSGYLTRRLIDVTQDVIILQEDCGTANGTWIIEPKEKGMLPPLVDRILGRWTAHNVVHPQTGEIIVDNNEEIDEIKAKAIGEAGITEVFVRSPLTCESTHGMCRRCYGRDLGRVRLVDMNTAVGIIAAQSIGEPGTQLTLRTFHTGGVVGVDITTGLPRVEELFEARPPKVQSIISEIDGVVEVIENENGRHIRIASDEVYQDEYELPSGWKTQVQSRQWVDSGMVLASPELEGKSKAVVQSDQNVVARVAGEVTVEGNLITIKYSESEEREYTIPAAMQIKVKTGDTIRAGQQLTDGSINPQDILSILGRDAVQKYLVEEVQKVYYSQGVHINDKHIEVIARQMLIKVRIDSSGDTDLVPGELVDKFRYEDINAKVLAEGGEPATAHTVLMGITRASLSTESWLAAASFQETTRVLTDAAIYGRVDKLSGLKENVIIGKLIPAQCKSCKEATIERAERIAAAASAPAMSGLPENCL.

C60, C62, C75, and C78 together coordinate Zn(2+). Positions 516, 518, and 520 each coordinate Mg(2+). Residues C841, C914, C921, and C924 each contribute to the Zn(2+) site.

Belongs to the RNA polymerase beta' chain family. The RNAP catalytic core consists of 2 alpha, 1 beta, 1 beta' and 1 omega subunit. When a sigma factor is associated with the core the holoenzyme is formed, which can initiate transcription. Mg(2+) is required as a cofactor. The cofactor is Zn(2+).

It catalyses the reaction RNA(n) + a ribonucleoside 5'-triphosphate = RNA(n+1) + diphosphate. DNA-dependent RNA polymerase catalyzes the transcription of DNA into RNA using the four ribonucleoside triphosphates as substrates. This is DNA-directed RNA polymerase subunit beta' from Dehalococcoides mccartyi (strain CBDB1).